The following is a 946-amino-acid chain: Isoleucine--tRNA ligase (946 aa).

The short motif at 58-68 (PYANGSIHIGH) is the 'HIGH' region element. Residue E568 coordinates L-isoleucyl-5'-AMP. A 'KMSKS' region motif is present at residues 609 to 613 (KMSKS). Residue K612 participates in ATP binding. Zn(2+)-binding residues include C908, C911, C928, and C931.

This sequence belongs to the class-I aminoacyl-tRNA synthetase family. IleS type 1 subfamily. In terms of assembly, monomer. It depends on Zn(2+) as a cofactor.

It localises to the cytoplasm. The enzyme catalyses tRNA(Ile) + L-isoleucine + ATP = L-isoleucyl-tRNA(Ile) + AMP + diphosphate. Functionally, catalyzes the attachment of isoleucine to tRNA(Ile). As IleRS can inadvertently accommodate and process structurally similar amino acids such as valine, to avoid such errors it has two additional distinct tRNA(Ile)-dependent editing activities. One activity is designated as 'pretransfer' editing and involves the hydrolysis of activated Val-AMP. The other activity is designated 'posttransfer' editing and involves deacylation of mischarged Val-tRNA(Ile). This chain is Isoleucine--tRNA ligase, found in Chromohalobacter salexigens (strain ATCC BAA-138 / DSM 3043 / CIP 106854 / NCIMB 13768 / 1H11).